The following is a 383-amino-acid chain: Probable sphingolipid long chain base-responsive protein pil2 (383 aa).

A Phosphoserine modification is found at serine 162. Disordered regions lie at residues 292–336 (PRTD…EDYQ) and 356–383 (GEEDDEEVGSQGVAETSMPSTSAQPIAA). Residues 311–324 (TTSGTTHSYTSTGS) are compositionally biased toward low complexity. Composition is skewed to polar residues over residues 325–336 (KRYSQMGTEDYQ) and 368–383 (VAETSMPSTSAQPIAA).

Phosphorylated by ksg1 and ppk21. Phosphorylation is regulated by sphingolipid long chain bases (LCBs).

Negative regulator of cell wall integrity (CWI) in unstressed cells, probably by inhibiting protein kinase ksg1/ppk21 activity and regulating their downstream CWI pathways pck2-MAP kinase pathway and protein kinase gad8 pathway. Activity may be regulated by the transient increase of sphingolipid long chain bases (LCBs) during heat stress. The chain is Probable sphingolipid long chain base-responsive protein pil2 (pil2) from Schizosaccharomyces pombe (strain 972 / ATCC 24843) (Fission yeast).